An 81-amino-acid polypeptide reads, in one-letter code: Small ribosomal subunit protein bS18 (81 aa).

It belongs to the bacterial ribosomal protein bS18 family. Part of the 30S ribosomal subunit. Forms a tight heterodimer with protein bS6.

Functionally, binds as a heterodimer with protein bS6 to the central domain of the 16S rRNA, where it helps stabilize the platform of the 30S subunit. This is Small ribosomal subunit protein bS18 from Leptospira borgpetersenii serovar Hardjo-bovis (strain JB197).